Reading from the N-terminus, the 323-residue chain is 1D-myo-inositol 2-acetamido-2-deoxy-alpha-D-glucopyranoside deacetylase 1 (323 aa).

Residues histidine 30, aspartate 33, and histidine 165 each contribute to the Zn(2+) site.

The protein belongs to the MshB deacetylase family. Zn(2+) is required as a cofactor.

The catalysed reaction is 1D-myo-inositol 2-acetamido-2-deoxy-alpha-D-glucopyranoside + H2O = 1D-myo-inositol 2-amino-2-deoxy-alpha-D-glucopyranoside + acetate. In terms of biological role, catalyzes the deacetylation of 1D-myo-inositol 2-acetamido-2-deoxy-alpha-D-glucopyranoside (GlcNAc-Ins) in the mycothiol biosynthesis pathway. This is 1D-myo-inositol 2-acetamido-2-deoxy-alpha-D-glucopyranoside deacetylase 1 from Catenulispora acidiphila (strain DSM 44928 / JCM 14897 / NBRC 102108 / NRRL B-24433 / ID139908).